We begin with the raw amino-acid sequence, 192 residues long: Ribosomal RNA large subunit methyltransferase E (192 aa).

S-adenosyl-L-methionine is bound by residues Gly-48, Phe-50, Asp-67, Asp-85, and Asp-107. The active-site Proton acceptor is Lys-147.

Belongs to the class I-like SAM-binding methyltransferase superfamily. RNA methyltransferase RlmE family.

The protein resides in the cytoplasm. The catalysed reaction is uridine(2552) in 23S rRNA + S-adenosyl-L-methionine = 2'-O-methyluridine(2552) in 23S rRNA + S-adenosyl-L-homocysteine + H(+). Its function is as follows. Specifically methylates the uridine in position 2552 of 23S rRNA at the 2'-O position of the ribose in the fully assembled 50S ribosomal subunit. This chain is Ribosomal RNA large subunit methyltransferase E, found in Borrelia garinii subsp. bavariensis (strain ATCC BAA-2496 / DSM 23469 / PBi) (Borreliella bavariensis).